The sequence spans 375 residues: Putative ZDHHC-type palmitoyltransferase 8 (375 aa).

2 helical membrane-spanning segments follow: residues 4–24 (LFDFVVLSSFIILLPLVTDFL) and 40–60 (VVGMILVFFIVSLIFAGVSLW). An N-linked (GlcNAc...) asparagine glycan is attached at asparagine 95. 3 helical membrane-spanning segments follow: residues 105–125 (ITFYFHIFFTIQLVVNLYYYY), 221–241 (FILFIGYTVMALIYACYLSFF), and 285–305 (YSFIFLCCCLIVTASFGILLF). The DHHC domain occupies 176-226 (VSDGKWSTINKPKSHHCRICKRCIDSMDHHCPFAANCIGINNHHYFILFIG). Asparagine 343 is a glycosylation site (N-linked (GlcNAc...) asparagine).

This sequence belongs to the DHHC palmitoyltransferase family.

It localises to the membrane. The enzyme catalyses L-cysteinyl-[protein] + hexadecanoyl-CoA = S-hexadecanoyl-L-cysteinyl-[protein] + CoA. The chain is Putative ZDHHC-type palmitoyltransferase 8 from Dictyostelium discoideum (Social amoeba).